A 331-amino-acid polypeptide reads, in one-letter code: Adenosine deaminase (331 aa).

The Zn(2+) site is built by His-12 and His-14. Substrate is bound by residues His-14, Asp-16, and Gly-170. His-197 serves as a coordination point for Zn(2+). The Proton donor role is filled by Glu-200. Residue Asp-278 coordinates Zn(2+). Asp-279 contacts substrate.

The protein belongs to the metallo-dependent hydrolases superfamily. Adenosine and AMP deaminases family. Adenosine deaminase subfamily. Zn(2+) is required as a cofactor.

The catalysed reaction is adenosine + H2O + H(+) = inosine + NH4(+). The enzyme catalyses 2'-deoxyadenosine + H2O + H(+) = 2'-deoxyinosine + NH4(+). In terms of biological role, catalyzes the hydrolytic deamination of adenosine and 2-deoxyadenosine. The polypeptide is Adenosine deaminase (Shewanella sp. (strain W3-18-1)).